The primary structure comprises 415 residues: DNA polymerase IV (415 aa).

Positions 15 to 196 (ILHVDMNCFF…LPVGAMHGIG (182 aa)) constitute a UmuC domain. The Mg(2+) site is built by aspartate 19 and aspartate 115. Glutamate 116 is an active-site residue. Residues 238–260 (KGMDDRQVDPSQMGQHKSVGNSM) are disordered. A compositionally biased stretch (polar residues) spans 246–260 (DPSQMGQHKSVGNSM).

Belongs to the DNA polymerase type-Y family. In terms of assembly, monomer. Mg(2+) serves as cofactor.

It is found in the cytoplasm. It catalyses the reaction DNA(n) + a 2'-deoxyribonucleoside 5'-triphosphate = DNA(n+1) + diphosphate. Poorly processive, error-prone DNA polymerase involved in untargeted mutagenesis. Copies undamaged DNA at stalled replication forks, which arise in vivo from mismatched or misaligned primer ends. These misaligned primers can be extended by PolIV. Exhibits no 3'-5' exonuclease (proofreading) activity. May be involved in translesional synthesis, in conjunction with the beta clamp from PolIII. The polypeptide is DNA polymerase IV (Bacillus cereus (strain ZK / E33L)).